The following is a 316-amino-acid chain: D-alanine--D-alanine ligase (316 aa).

The 188-residue stretch at 129–316 (KYILQAAGIP…ALQAEFCRYP (188 aa)) folds into the ATP-grasp domain. 162 to 217 (EGSLLYPMFIKPANMGSSVGITKAENREELQNALQEAYRYDTRAIVEQGIEAREIE) is a binding site for ATP. Mg(2+)-binding residues include D288, E301, and N303.

Belongs to the D-alanine--D-alanine ligase family. Mg(2+) serves as cofactor. It depends on Mn(2+) as a cofactor.

The protein localises to the cytoplasm. It catalyses the reaction 2 D-alanine + ATP = D-alanyl-D-alanine + ADP + phosphate + H(+). It participates in cell wall biogenesis; peptidoglycan biosynthesis. In terms of biological role, cell wall formation. In Enterococcus gallinarum, this protein is D-alanine--D-alanine ligase (ddl).